Here is a 249-residue protein sequence, read N- to C-terminus: Putative NAD(+)--arginine ADP-ribosyltransferase Vis (249 aa).

The signal sequence occupies residues 1–18 (MNTRFLLLLCCLSFTTFS). One can recognise a TR mART core domain in the interval 31-223 (EEEVTQLAED…IGVETVKASA (193 aa)). NAD(+) contacts are provided by residues 68–80 (SISG…DYLR), 117–120 (RGTW), and E137. R117 is an active-site residue. Catalysis depends on residues S142 and E191. E191 provides a ligand contact to NAD(+).

Belongs to the Arg-specific ADP-ribosyltransferase family.

It localises to the secreted. It catalyses the reaction L-arginyl-[protein] + NAD(+) = N(omega)-(ADP-D-ribosyl)-L-arginyl-[protein] + nicotinamide + H(+). In terms of biological role, a probable mono(ADP-ribosyl)transferase, it may ADP-ribosylate Arg in target protein(s). Upon expression in yeast cells causes cell death. This is Putative NAD(+)--arginine ADP-ribosyltransferase Vis from Vibrio splendidus (strain 12B01).